The sequence spans 469 residues: Argininosuccinate lyase (469 aa).

The protein belongs to the lyase 1 family. Argininosuccinate lyase subfamily.

The protein localises to the cytoplasm. It carries out the reaction 2-(N(omega)-L-arginino)succinate = fumarate + L-arginine. It functions in the pathway amino-acid biosynthesis; L-arginine biosynthesis; L-arginine from L-ornithine and carbamoyl phosphate: step 3/3. This Burkholderia vietnamiensis (strain G4 / LMG 22486) (Burkholderia cepacia (strain R1808)) protein is Argininosuccinate lyase.